The sequence spans 55 residues: Lantibiotic epilancin 15X (55 aa).

A propeptide spans 1–24 (MKKELFDLNLNKDIEAQKSDLNPQ) (cleaved by ElxP). Ser-25 is subject to D-lactate; by the dehydratase ElxB and the dehydrogenase ElxO. A 2,3-didehydroalanine (Ser); by the dehydratase ElxB modification is found at Ser-27. 2,3-didehydrobutyrine; by the dehydratase ElxB is present on residues Thr-31 and Thr-32. Residues 36 to 40 (SKKLC) constitute a cross-link (lanthionine (Ser-Cys); by the dehydratase ElxB and the cyclase ElxC). 2 consecutive cross-links (beta-methyllanthionine (Thr-Cys); by the dehydratase ElxB and the cyclase ElxC) follow at residues 44-47 (TLTC) and 46-49 (TCGC). Thr-52 is modified (2,3-didehydrobutyrine; by the dehydratase ElxB).

Post-translationally, maturation of this lantibiotic involves the enzymatic conversion of Thr, and Ser into dehydrated AA by ElxB and the formation of thioether bonds with cysteine by the cyclase ElxC. The next steps are cleavage of the leader peptide by ElxP and membrane translocation by ElxT. The leader peptide may be removed before membrane translocation, in contrast to other lantibiotics for which the cleavage occur after translocation. This is suggested by the probable cytoplasmic localization of the serine protease ElxP that cleaves the leader peptide. The N-terminal D-lactate is probably produced by dehydration of Ser-25 by ElxB, followed by proteolytic removal of the leader peptide by the serine protease ElxP and hydrolysis of the resulting new N-terminal dehydroalanine. This hydrolysis may occur spontaneously. The pyruvate group thus formed is reduced to D-lactate by the NADPH-dependent oxidoreductase ElxO. This N-terminal D-lactate protects the lantibiotic against degradation against aminopeptidase. In terms of processing, it is not established whether the 2,3-didehydrobutyrines are the E- or Z-isomers.

Its function is as follows. Lanthionine-containing peptide antibiotic (lantibiotic) active on Gram-positive bacteria such as staphylococci, enterococci and streptococci. The bactericidal activity of lantibiotics is based on depolarization of energized bacterial cytoplasmic membranes, initiated by the formation of aqueous transmembrane pores. The protein is Lantibiotic epilancin 15X of Staphylococcus epidermidis.